Consider the following 265-residue polypeptide: Phosphate import ATP-binding protein PstB 2 (265 aa).

The region spanning 13 to 260 is the ABC transporter domain; sequence FRTENLNVYY…PTKQATRDYV (248 aa). 45–52 contacts ATP; that stretch reads GPSGCGKS.

The protein belongs to the ABC transporter superfamily. Phosphate importer (TC 3.A.1.7) family. In terms of assembly, the complex is composed of two ATP-binding proteins (PstB), two transmembrane proteins (PstC and PstA) and a solute-binding protein (PstS).

Its subcellular location is the cell inner membrane. The enzyme catalyses phosphate(out) + ATP + H2O = ADP + 2 phosphate(in) + H(+). Functionally, part of the ABC transporter complex PstSACB involved in phosphate import. Responsible for energy coupling to the transport system. In Synechococcus sp. (strain JA-3-3Ab) (Cyanobacteria bacterium Yellowstone A-Prime), this protein is Phosphate import ATP-binding protein PstB 2.